The following is a 224-amino-acid chain: Putative carbamate hydrolase RutD (224 aa).

The 102-residue stretch at 14–115 (PVVVLISGLG…TVLVSVNGWL (102 aa)) folds into the AB hydrolase-1 domain.

It belongs to the AB hydrolase superfamily. Hydrolase RutD family.

The enzyme catalyses carbamate + 2 H(+) = NH4(+) + CO2. Its function is as follows. Involved in pyrimidine catabolism. May facilitate the hydrolysis of carbamate, a reaction that can also occur spontaneously. This chain is Putative carbamate hydrolase RutD, found in Shigella dysenteriae serotype 1 (strain Sd197).